The sequence spans 198 residues: Nascent polypeptide-associated complex subunit alpha (198 aa).

The NAC-A/B domain maps to 48–113 (ITRVVLKRTR…QAAAETGSVS (66 aa)). The region spanning 159 to 198 (LEDSDIKLVMEQANVSRNKAINGLKKNDSDVVNTIMDLCK) is the UBA domain.

Belongs to the NAC-alpha family. As to quaternary structure, part of the nascent polypeptide-associated complex (NAC), consisting of EGD2 and EGD1. NAC associates with ribosomes via EGD1.

Its subcellular location is the cytoplasm. It is found in the nucleus. In terms of biological role, component of the nascent polypeptide-associated complex (NAC), a dynamic component of the ribosomal exit tunnel, protecting the emerging polypeptides from interaction with other cytoplasmic proteins to ensure appropriate nascent protein targeting. The NAC complex also promotes mitochondrial protein import by enhancing productive ribosome interactions with the outer mitochondrial membrane and blocks the inappropriate interaction of ribosomes translating non-secretory nascent polypeptides with translocation sites in the membrane of the endoplasmic reticulum. EGD2 may also be involved in transcription regulation. This Yarrowia lipolytica (strain CLIB 122 / E 150) (Yeast) protein is Nascent polypeptide-associated complex subunit alpha (EGD2).